A 313-amino-acid polypeptide reads, in one-letter code: D-alanine--D-alanine ligase (313 aa).

Residues 108–308 (KLVWQQTGVP…YSELVVKVLS (201 aa)) enclose the ATP-grasp domain. 138–193 (VAKLGLPLFVKPASEGSSVAVLKVKTADALPAALEEAATHDKIVIVEKSIEGGGEY) contacts ATP. Residues Asp-262, Glu-275, and Asn-277 each contribute to the Mg(2+) site.

The protein belongs to the D-alanine--D-alanine ligase family. Mg(2+) is required as a cofactor. Mn(2+) serves as cofactor.

It is found in the cytoplasm. The catalysed reaction is 2 D-alanine + ATP = D-alanyl-D-alanine + ADP + phosphate + H(+). The protein operates within cell wall biogenesis; peptidoglycan biosynthesis. Cell wall formation. The chain is D-alanine--D-alanine ligase from Burkholderia cenocepacia (strain ATCC BAA-245 / DSM 16553 / LMG 16656 / NCTC 13227 / J2315 / CF5610) (Burkholderia cepacia (strain J2315)).